A 257-amino-acid chain; its full sequence is Cyclin-C1-1 (257 aa).

Belongs to the cyclin family. Cyclin C subfamily.

The protein is Cyclin-C1-1 of Oryza sativa subsp. japonica (Rice).